The chain runs to 634 residues: RNA polymerase sigma factor RpoD (634 aa).

A disordered region spans residues 177-202 (LHDETPENDEENSSETEGEEHEDNHL). Residues 182–197 (PENDEENSSETEGEEH) are compositionally biased toward acidic residues. Residues 385-455 (MIEANLRLVI…TRAIADQART (71 aa)) form a sigma-70 factor domain-2 region. The Interaction with polymerase core subunit RpoC motif lies at 409-412 (DLIQ). A sigma-70 factor domain-3 region spans residues 464 to 541 (ETINKILRTS…DKNAVAPIDA (78 aa)). The segment at 554–607 (VLATLTPREERVLRMRFGIGMNTDHTLEEVGQQFKVTRERIRQIESKALRKLQH) is sigma-70 factor domain-4. Residues 580–599 (LEEVGQQFKVTRERIRQIES) constitute a DNA-binding region (H-T-H motif). The segment at 608–634 (PIRSKKLNSFRSGGKRGDGNSSDLLEA) is disordered.

The protein belongs to the sigma-70 factor family. RpoD/SigA subfamily. As to quaternary structure, interacts transiently with the RNA polymerase catalytic core.

The protein localises to the cytoplasm. Functionally, sigma factors are initiation factors that promote the attachment of RNA polymerase to specific initiation sites and are then released. This sigma factor is the primary sigma factor during exponential growth. The chain is RNA polymerase sigma factor RpoD from Rickettsia conorii (strain ATCC VR-613 / Malish 7).